The chain runs to 140 residues: Small ribosomal subunit protein uS12 (140 aa).

Asp-102 is subject to 3-methylthioaspartic acid.

The protein belongs to the universal ribosomal protein uS12 family. In terms of assembly, part of the 30S ribosomal subunit. Contacts proteins S8 and S17. May interact with IF1 in the 30S initiation complex.

Functionally, with S4 and S5 plays an important role in translational accuracy. Its function is as follows. Interacts with and stabilizes bases of the 16S rRNA that are involved in tRNA selection in the A site and with the mRNA backbone. Located at the interface of the 30S and 50S subunits, it traverses the body of the 30S subunit contacting proteins on the other side and probably holding the rRNA structure together. The combined cluster of proteins S8, S12 and S17 appears to hold together the shoulder and platform of the 30S subunit. The sequence is that of Small ribosomal subunit protein uS12 from Bacillus cereus (strain G9842).